A 199-amino-acid polypeptide reads, in one-letter code: NAD(P)H dehydrogenase (quinone) (199 aa).

In terms of domain architecture, Flavodoxin-like spans 4–190 (ILVLYYSMYG…KIARYQGEHV (187 aa)). FMN contacts are provided by residues 10–15 (SMYGHI) and 79–81 (TRF). NAD(+) is bound at residue Tyr-12. Residue Trp-99 coordinates substrate. His-134 lines the FMN pocket.

Belongs to the WrbA family. FMN serves as cofactor.

The catalysed reaction is a quinone + NADH + H(+) = a quinol + NAD(+). It catalyses the reaction a quinone + NADPH + H(+) = a quinol + NADP(+). The polypeptide is NAD(P)H dehydrogenase (quinone) (Photorhabdus laumondii subsp. laumondii (strain DSM 15139 / CIP 105565 / TT01) (Photorhabdus luminescens subsp. laumondii)).